We begin with the raw amino-acid sequence, 1253 residues long: Latent-transforming growth factor beta-binding protein 3 (1253 aa).

The N-terminal stretch at 1–38 (MPGPRGAAHGLAPAMRQAGALGLLALLLLALLGPGGGA) is a signal peptide. An N-linked (GlcNAc...) asparagine glycan is attached at Asn86. The region spanning 106–138 (RVVVCPLPCMNGGQCSSRNQCLCPPDFTGRFCQ) is the EGF-like 1 domain. 3 disulfides stabilise this stretch: Cys110/Cys120, Cys114/Cys126, and Cys128/Cys137. The tract at residues 244-270 (GPNAEGPASSQHLLPHPKPQHPRPPTQ) is disordered. A TB 1 domain is found at 274–328 (GRCFQDTLPKQPCGSNPLPGLTKQEDCCGSIGTAWGQSKCHKCPQLQYTGVQKPG). 3 cysteine pairs are disulfide-bonded: Cys276/Cys300, Cys286/Cys313, and Cys301/Cys316. Asn346 carries N-linked (GlcNAc...) asparagine glycosylation. One can recognise an EGF-like 2; calcium-binding domain in the interval 352–392 (DINECAMPGMCRHGDCLNNPGSYRCVCPPGHSLGPSRTQCI). Disulfide bonds link Cys356–Cys367, Cys362–Cys376, Cys378–Cys391, Cys402–Cys425, Cys412–Cys437, Cys426–Cys440, and Cys427–Cys452. The TB 2 domain occupies 400 to 452 (SLCFRLVSTEHQCQHPLTTRLTRQLCCCSVGKAWGARCQRCPADGTAAFKEIC). The disordered stretch occupies residues 475–555 (FSLFLHPDGP…PTFHRFLPDL (81 aa)). The EGF-like 3 domain occupies 571–612 (ETDECRLNQNICGHGQCVPGPSDYSCHCNAGYRSHPQHRYCV). 32 disulfide bridges follow: Cys575-Cys587, Cys582-Cys596, Cys598-Cys611, Cys617-Cys629, Cys622-Cys638, Cys661-Cys673, Cys667-Cys682, Cys684-Cys698, Cys745-Cys756, Cys751-Cys765, Cys767-Cys780, Cys786-Cys797, Cys792-Cys806, Cys808-Cys821, Cys827-Cys838, Cys833-Cys847, Cys849-Cys861, Cys867-Cys880, Cys874-Cys889, Cys891-Cys904, Cys916-Cys939, Cys926-Cys951, Cys940-Cys956, Cys941-Cys968, Cys994-Cys1007, Cys1002-Cys1016, Cys1018-Cys1031, Cys1037-Cys1048, Cys1043-Cys1057, Cys1059-Cys1072, Cys1113-Cys1127, and Cys1114-Cys1136. An EGF-like 4; calcium-binding domain is found at 613-656 (DVNECEAEPCGPGKGICMNTGGSYNCHCNRGYRLHVGAGGRSCV). Positions 657–699 (DLNECTKPHLCGDGGFCINFPGHYKCNCYPGYRLKASRPPICE) constitute an EGF-like 5; calcium-binding domain. An EGF-like 6; calcium-binding domain is found at 741-781 (DVNECSEGTPCSPGWCENLPGSYRCTCAQGYEPAQDGLSCI). The region spanning 782–822 (DVDECEAGKVCQDGICTNTPGSFQCQCLSGYHLSRDRSRCE) is the EGF-like 7; calcium-binding domain. The 39-residue stretch at 823–861 (DIDECDFPAACIGGDCINTNGSYRCLCPQGHRLVGGRKC) folds into the EGF-like 8; calcium-binding domain. Asn842 carries N-linked (GlcNAc...) asparagine glycosylation. The EGF-like 9; calcium-binding domain occupies 863–905 (DIDECSQDPGLCLPHGACENLQGSYVCVCDEGFTLTQDQHGCE). The TB 3 domain maps to 914–968 (KECYLNFDDTVFCDSVLATNVTQQECCCSLGAGWGDHCEIYPCPVYSSAEFHSLC). Asn933 carries N-linked (GlcNAc...) asparagine glycosylation. The region spanning 990–1032 (DIDECILFGAEICKEGKCVNTQPGYECYCKQGFYYDGNLLECV) is the EGF-like 10; calcium-binding domain. The region spanning 1033–1072 (DVDECLDESNCRNGVCENTRGGYRCACTPPAEYSPAQRQC) is the EGF-like 11; calcium-binding domain. The TB 4 domain occupies 1086–1136 (EVCWGQRGEDGMCMGPLAGPALTFDDCCCRQGRGWGTQCRPCPPRGTGSQC). The span at 1138–1148 (TSQSESNSFWD) shows a compositional bias: polar residues. The segment at 1138–1169 (TSQSESNSFWDTSPLLLGKSPRDEDSSEEDSD) is disordered. One can recognise an EGF-like 12; calcium-binding domain in the interval 1204 to 1231 (DIDECRELNQRGLLCKSERCVNTSGSFR). Disulfide bonds link Cys1208-Cys1223 and Cys1218-Cys1232. N-linked (GlcNAc...) asparagine glycosylation occurs at Asn1225.

It belongs to the LTBP family. As to quaternary structure, forms part of the large latent transforming growth factor beta (TGFB1) precursor complex; removal is essential for activation of complex. Interacts with EFEMP2. Post-translationally, contains hydroxylated asparagine residues. Two intrachain disulfide bonds from the TB3 domain are rearranged upon TGFB1 binding, and form interchain bonds with TGFB1 propeptide, anchoring it to the extracellular matrix.

Its subcellular location is the secreted. It localises to the extracellular space. It is found in the extracellular matrix. In terms of biological role, key regulator of transforming growth factor beta (TGFB1, TGFB2 and TGFB3) that controls TGF-beta activation by maintaining it in a latent state during storage in extracellular space. Associates specifically via disulfide bonds with the Latency-associated peptide (LAP), which is the regulatory chain of TGF-beta, and regulates integrin-dependent activation of TGF-beta. This chain is Latent-transforming growth factor beta-binding protein 3 (Ltbp3), found in Mus musculus (Mouse).